Consider the following 434-residue polypeptide: 4-hydroxyphenylpyruvate dioxygenase (434 aa).

Residues 1 to 21 (MPPTPTTPAATGAAAAVTPEH) form a disordered region. The segment covering 7 to 19 (TPAATGAAAAVTP) has biased composition (low complexity). VOC domains follow at residues 41 to 192 (SFHH…FLPG) and 208 to 368 (RFDH…IFTK). Positions 211, 293, and 379 each coordinate Fe cation.

Belongs to the 4HPPD family. Fe cation serves as cofactor.

Its subcellular location is the cytoplasm. The catalysed reaction is 3-(4-hydroxyphenyl)pyruvate + O2 = homogentisate + CO2. The protein operates within amino-acid degradation; L-phenylalanine degradation; acetoacetate and fumarate from L-phenylalanine: step 3/6. It participates in cofactor biosynthesis; prenylquinone biosynthesis. The protein is 4-hydroxyphenylpyruvate dioxygenase of Hordeum vulgare (Barley).